We begin with the raw amino-acid sequence, 708 residues long: Large T antigen (708 aa).

An N-acetylmethionine; by host modification is found at Met-1. Residues 12–75 (QLMDLLGLER…VKYAHQPDFG (64 aa)) enclose the J domain. The interval 63–89 (EDGVKYAHQPDFGGFWDATEIPTYGTD) is binding of LT to the CUL7 complex. Residues 103 to 107 (LFCSE) carry the LXCXE motif motif. Phosphoserine; by host is present on residues Ser-106, Ser-112, Ser-120, and Ser-123. The disordered stretch occupies residues 109-134 (MPSSDDEATADSQHSTPPKKKRKVED). Thr-124 is modified (phosphothreonine; by host). The Nuclear localization signal motif lies at 125–132 (PPKKKRKV). The segment at residues 139 to 254 (PSELLSFLSH…EESLPGGLKE (116 aa)) is a DNA-binding region (T-ag OBD). The T-ag D1-type zinc-finger motif lies at 265-357 (TKQVSWKLVT…KRVDSLQLTR (93 aa)). Zn(2+) contacts are provided by Cys-302, Cys-305, His-313, and His-317. The interval 337–672 (CQQAVDTVLA…IDSQSQGSFQ (336 aa)) is binding to host TP53 protein. The SF3 helicase domain occupies 400-560 (KMDSVVYDFL…DYLKHCLERS (161 aa)). The segment at 418-616 (KKRYWLFKGP…FSLSVYQKMK (199 aa)) is ATPase activity. 426–433 (GPIDSGKT) is a binding site for ATP. Positions 627–708 (DWLRNSDDDD…PPTPPPEPET (82 aa)) are C-terminal region. Residues 630–685 (RNSDDDDEDSQENADKNEDGGEKNMEDSGHETGIDSQSQGSFQAPQSSQSVHDHNQ) form a disordered region. Ser-639 is subject to Phosphoserine; by host. A compositionally biased stretch (basic and acidic residues) spans 642 to 662 (NADKNEDGGEKNMEDSGHETG). Residues 663 to 679 (IDSQSQGSFQAPQSSQS) show a composition bias toward polar residues. Residues Ser-676, Ser-677, and Ser-679 each carry the phosphoserine; by host modification. Position 697 is an N6-acetyllysine; by host (Lys-697). The CPD stretch occupies residues 699–708 (PPTPPPEPET). Phosphothreonine; by host is present on Thr-701.

Isoform large T antigen forms homohexamers in the presence of ATP. Interacts with host HDAC1. Interacts (via LXCXE domain) with host RB1; the interaction induces the aberrant dissociation of RB1-E2F1 complex thereby disrupting RB1's activity. Interacts (via LXCXE domain) with host pRB-related proteins RBL1 and RBL2. Interacts (via C-terminus) with host TOP1 and POLA1 allowing DNA replication. Interacts with host TP53, inhibiting TP53 binding to DNA. Interacts with host preinitiation complex components TBP, TFIIA and TFIID to regulate transcription initiation. LT interacts (via CPD region) with host FBW7gamma isoform (via WD repeats); seems to function as a competitive inhibitor of FBW7gamma function for physiologic substrates. LT interacts with host E3 ubiquitin ligase CUL7; this interaction seems to inhibit CUL7. Component of a SCF(CUL7)-like complex composed of SV40 Lt and host proteins CUL7, SKP1, RBX1, and FBXW8. LT interacts with host BUB1; this interaction induces activation of a DNA damage response and promotes p53 stabilization and phosphorylation. Interacts with host FAM111A and this interaction is required for efficient viral replication and sustained viral gene expression in restrictive cell types. Mg(2+) serves as cofactor. In terms of processing, phosphorylated on both serine and threonine residues. Phosphorylation on Ser-120 and Ser-123 inhibits viral replication, while phosphorylation on Thr-124 enhances replication by activating the DNA-binding domain. Phosphorylation on Thr-701 is required for binding to host FBW7gamma isoform. Dephosphorylated preferentially by PP2A on Ser-120, Ser-123, Ser-677 and perhaps Ser-679. Small t antigen inhibits the dephosphorylation by the AC form of PP2A. Post-translationally, O-Glycosylated near the C-terminal region. Acetylated by CBP in a TP53-dependent manner.

Its subcellular location is the host nucleus. It carries out the reaction Couples ATP hydrolysis with the unwinding of duplex DNA by translocating in the 3'-5' direction.. It catalyses the reaction ATP + H2O = ADP + phosphate + H(+). DNA helicase activity is inhibited by ATP-gamma-S. Its function is as follows. Isoform large T antigen is a key early protein essential for both driving viral replication and inducing cellular transformation. Plays a role in viral genome replication by driving entry of quiescent cells into the cell cycle and by autoregulating the synthesis of viral early mRNA. Displays highly oncogenic activities by corrupting the host cellular checkpoint mechanisms that guard cell division and the transcription, replication, and repair of DNA. Participates in the modulation of cellular gene expression preceeding viral DNA replication. This step involves binding to host key cell cycle regulators retinoblastoma protein RB1/pRb and TP53. Induces the disassembly of host E2F1 transcription factors from RB1, thus promoting transcriptional activation of E2F1-regulated S-phase genes. Inhibits host TP53 binding to DNA, abrogating the ability of TP53 to stimulate gene expression. Plays the role of a TFIID-associated factor (TAF) in transcription initiation for all three RNA polymerases, by stabilizing the TBP-TFIIA complex on promoters. Initiates viral DNA replication and unwinding via interactions with the viral origin of replication. Binds two adjacent sites in the SV40 origin. The replication fork movement is facilitated by Large T antigen helicase activity. Has processive 3'-5' DNA helicase activity which requires a short 3' single-stranded region and ATP; other (d)NTPs can partially replace ATP. Activates the transcription of viral late mRNA, through host TBP and TFIIA stabilization. Interferes with histone deacetylation mediated by HDAC1, leading to activation of transcription. May inactivate the growth-suppressing properties of the E3 ubiquitin ligase CUL7. Isoform 17kT antigen targets host RBL2 for degradation and promotes cell proliferation. Transactivates host cyclin A promoter through its J domain. Functionally, unwinds G4 DNA (planar arrays of 4 guanine bases stabilized by hydrogen bonds, parallel and antiparallel arrays were tested); unwinding occurs in the 3'-5' direction, requires a 3' single-stranded end and hydrolyzable ATP. This is Large T antigen from Macaca (macaques).